The following is a 140-amino-acid chain: Hemoglobin subunit beta (140 aa).

Residues 1–140 (GSDLVSGFWG…VGDALAKAYH (140 aa)) form the Globin domain. Heme b is bound by residues H57 and H86.

This sequence belongs to the globin family. In terms of assembly, heterotetramer of two alpha chains and two beta chains. In terms of tissue distribution, red blood cells.

Functionally, involved in oxygen transport from the lung to the various peripheral tissues. In Pelophylax lessonae (Pool frog), this protein is Hemoglobin subunit beta (HBB).